We begin with the raw amino-acid sequence, 418 residues long: Queuine tRNA-ribosyltransferase accessory subunit 2 (418 aa).

Cys-325, Cys-327, Cys-330, and His-356 together coordinate Zn(2+).

Belongs to the queuine tRNA-ribosyltransferase family. QTRT2 subfamily. In terms of assembly, heterodimer of a catalytic subunit and an accessory subunit. The cofactor is Zn(2+).

The protein resides in the cytoplasm. Functionally, non-catalytic subunit of the queuine tRNA-ribosyltransferase (TGT) that catalyzes the base-exchange of a guanine (G) residue with queuine (Q) at position 34 (anticodon wobble position) in tRNAs with GU(N) anticodons (tRNA-Asp, -Asn, -His and -Tyr), resulting in the hypermodified nucleoside queuosine (7-(((4,5-cis-dihydroxy-2-cyclopenten-1-yl)amino)methyl)-7-deazaguanosine). This chain is Queuine tRNA-ribosyltransferase accessory subunit 2, found in Drosophila sechellia (Fruit fly).